The chain runs to 496 residues: Histidine--tRNA ligase (496 aa).

Belongs to the class-II aminoacyl-tRNA synthetase family. Homodimer.

The protein localises to the cytoplasm. It catalyses the reaction tRNA(His) + L-histidine + ATP = L-histidyl-tRNA(His) + AMP + diphosphate + H(+). The sequence is that of Histidine--tRNA ligase from Bartonella bacilliformis (strain ATCC 35685 / KC583 / Herrer 020/F12,63).